Consider the following 248-residue polypeptide: MIKATYSSAKDFYSLLSGLLKVTDEIILNFTEDSIFSRYLTDDKVLMVIFKIPKEYLEDYTIDKPLGIKININDLKKILGKAKSKSATVTLEETEAGLKVTVRDEKTGTRSNIYIKGEKTSIDQLTEPKVNLSVTFTTDGDVLKDIARDLSLVGEEVEISADENTVTLSTEEAGRTYKSLLKQDKPLKSLNVESPSKAVYSIEVLKDVFKVTSISQNVTVGFGNNIPMKIEVPTDSGGQLIFWIAPRL.

This sequence belongs to the PCNA family. In terms of assembly, the subunits circularize to form a toroid; DNA passes through its center. Replication factor C (RFC) is required to load the toroid on the DNA. Forms a dimeric complex with PCNA3 and trimeric complexes PCNA123 and PCNA323; does not form homotrimers. Crystal structures show a heterotetramer of 2 PCNA2 and 2 PCNA3, which would be large enough to clamp a Holliday junction.

Its function is as follows. Sliding clamp subunit that acts as a moving platform for DNA processing. Responsible for tethering the catalytic subunit of DNA polymerase and other proteins to DNA during high-speed replication. Both trimeric complexes inhibit DNA ligase and both 3'-5' and 5'-3' activity of Hel308 (Hjm) helicase, but stimulate Hjc, the Holliday junction cleavage enzyme. The sequence is that of DNA polymerase sliding clamp 2 from Sulfurisphaera tokodaii (strain DSM 16993 / JCM 10545 / NBRC 100140 / 7) (Sulfolobus tokodaii).